The chain runs to 94 residues: Cyclin-dependent kinases regulatory subunit (94 aa).

It belongs to the CKS family. In terms of assembly, forms a homohexamer that can probably bind six kinase subunits. Interacts with cdk-1.

It localises to the nucleus. Functionally, binds to the catalytic subunit of the cyclin dependent kinases and is essential for their biological function. Has a role in the exit from M phase during early mitotic cell division. More specifically, thought to act by degrading B-type cyclins that causes breakdown of nuclear envelope and exit mitosis. The protein is Cyclin-dependent kinases regulatory subunit (cks-1) of Caenorhabditis elegans.